Here is a 423-residue protein sequence, read N- to C-terminus: 58 kDa phosphoprotein (423 aa).

Basic and acidic residues predominate over residues 46–60; that stretch reads KMGYEKMKSEDSTEE. Positions 46 to 82 are disordered; it reads KMGYEKMKSEDSTEEKSDEEEEDEEEEEEEEEDDDPE. The segment covering 61–82 has biased composition (acidic residues); it reads KSDEEEEDEEEEEEEEEDDDPE. 3 TPR repeats span residues 113–146, 147–180, and 181–214; these read ICKLKEEAVDLVENKKYEEALEKYNKIISFGNPS, AMIYTKRASILLNLKRPKACIRDCTEALNLNVDS, and ANAYKIRAKAYRYLGKWEFAHADMEQGQKIDYDE. The tract at residues 260 to 301 is disordered; sequence KKKAEKMYKENNKRENYDSDSSDSSYSEPDFSGDFPGGMPGG. Residues 264–276 are compositionally biased toward basic and acidic residues; it reads EKMYKENNKRENY. The segment at 292 to 362 is 19 X 3-4 AA approximate repeats; it reads GDFPGGMPGG…GMPGMPGGMP (71 aa). Residues 361–423 form the STI1 domain; that stretch reads MPDLNSPEMK…GGMMGEKPKP (63 aa).

Its subcellular location is the cytoplasm. May play a role in protein folding or protein-protein interactions. May act as a co-chaperone. In Plasmodium berghei, this protein is 58 kDa phosphoprotein.